The following is a 181-amino-acid chain: Trafficking protein particle complex subunit 3-like protein (181 aa).

A lipid anchor (S-palmitoyl cysteine) is attached at C68.

The protein belongs to the TRAPP small subunits family. BET3 subfamily. As to quaternary structure, homodimer. Component of the multisubunit TRAPP (transport protein particle) complex, which includes at least TRAPPC2, TRAPPC2L, TRAPPC3, TRAPPC3L, TRAPPC4, TRAPPC5, TRAPPC8, TRAPPC9, TRAPPC10, TRAPPC11 and TRAPPC12.

Its subcellular location is the golgi apparatus. The protein resides in the cis-Golgi network. The protein localises to the endoplasmic reticulum. Functionally, may play a role in vesicular transport from endoplasmic reticulum to Golgi. The polypeptide is Trafficking protein particle complex subunit 3-like protein (Trappc3l) (Mus musculus (Mouse)).